We begin with the raw amino-acid sequence, 371 residues long: Queuine tRNA-ribosyltransferase (371 aa).

D90 acts as the Proton acceptor in catalysis. Residues D90 to F94, D144, Q189, and G215 each bind substrate. Positions G246 to N252 are RNA binding. Residue D265 is the Nucleophile of the active site. The tract at residues T270–R274 is RNA binding; important for wobble base 34 recognition. Zn(2+) is bound by residues C303, C305, C308, and H334.

The protein belongs to the queuine tRNA-ribosyltransferase family. In terms of assembly, homodimer. Within each dimer, one monomer is responsible for RNA recognition and catalysis, while the other monomer binds to the replacement base PreQ1. It depends on Zn(2+) as a cofactor.

It catalyses the reaction 7-aminomethyl-7-carbaguanine + guanosine(34) in tRNA = 7-aminomethyl-7-carbaguanosine(34) in tRNA + guanine. The protein operates within tRNA modification; tRNA-queuosine biosynthesis. Functionally, catalyzes the base-exchange of a guanine (G) residue with the queuine precursor 7-aminomethyl-7-deazaguanine (PreQ1) at position 34 (anticodon wobble position) in tRNAs with GU(N) anticodons (tRNA-Asp, -Asn, -His and -Tyr). Catalysis occurs through a double-displacement mechanism. The nucleophile active site attacks the C1' of nucleotide 34 to detach the guanine base from the RNA, forming a covalent enzyme-RNA intermediate. The proton acceptor active site deprotonates the incoming PreQ1, allowing a nucleophilic attack on the C1' of the ribose to form the product. After dissociation, two additional enzymatic reactions on the tRNA convert PreQ1 to queuine (Q), resulting in the hypermodified nucleoside queuosine (7-(((4,5-cis-dihydroxy-2-cyclopenten-1-yl)amino)methyl)-7-deazaguanosine). The protein is Queuine tRNA-ribosyltransferase of Helicobacter pylori (strain Shi470).